Reading from the N-terminus, the 254-residue chain is tRNA (guanine-N(7)-)-methyltransferase (254 aa).

The segment covering 1–11 has biased composition (basic and acidic residues); sequence MSISDNSREEL. A disordered region spans residues 1–25; it reads MSISDNSREELGELPAGRPLQSEFN. Glu-83, Glu-108, Asp-135, and Asp-158 together coordinate S-adenosyl-L-methionine. Residue Asp-158 is part of the active site. Substrate is bound at residue Lys-162. Residues 164–169 form an interaction with RNA region; it reads RHNKRR. Substrate is bound by residues Asp-194 and 232–235; that span reads TKFE.

It belongs to the class I-like SAM-binding methyltransferase superfamily. TrmB family.

It carries out the reaction guanosine(46) in tRNA + S-adenosyl-L-methionine = N(7)-methylguanosine(46) in tRNA + S-adenosyl-L-homocysteine. It participates in tRNA modification; N(7)-methylguanine-tRNA biosynthesis. Functionally, catalyzes the formation of N(7)-methylguanine at position 46 (m7G46) in tRNA. The sequence is that of tRNA (guanine-N(7)-)-methyltransferase from Corynebacterium efficiens (strain DSM 44549 / YS-314 / AJ 12310 / JCM 11189 / NBRC 100395).